Consider the following 433-residue polypeptide: Serine hydroxymethyltransferase (433 aa).

121–123 (AHV) is a (6S)-5,6,7,8-tetrahydrofolate binding site. Lys227 is subject to N6-(pyridoxal phosphate)lysine. Glu243 contacts (6S)-5,6,7,8-tetrahydrofolate.

The protein belongs to the SHMT family. In terms of assembly, homodimer. The cofactor is pyridoxal 5'-phosphate.

The protein localises to the cytoplasm. The protein operates within amino-acid biosynthesis; glycine biosynthesis; glycine from L-serine: step 1/1. In terms of biological role, catalyzes the reversible interconversion of serine and glycine with a modified folate serving as the one-carbon carrier. Also exhibits a pteridine-independent aldolase activity toward beta-hydroxyamino acids, producing glycine and aldehydes, via a retro-aldol mechanism. This Saccharolobus islandicus (strain M.14.25 / Kamchatka #1) (Sulfolobus islandicus) protein is Serine hydroxymethyltransferase.